We begin with the raw amino-acid sequence, 182 residues long: Large ribosomal subunit protein uL10 (182 aa).

The protein belongs to the universal ribosomal protein uL10 family. As to quaternary structure, part of the ribosomal stalk of the 50S ribosomal subunit. The N-terminus interacts with L11 and the large rRNA to form the base of the stalk. The C-terminus forms an elongated spine to which L12 dimers bind in a sequential fashion forming a multimeric L10(L12)X complex.

Its function is as follows. Forms part of the ribosomal stalk, playing a central role in the interaction of the ribosome with GTP-bound translation factors. This chain is Large ribosomal subunit protein uL10, found in Chloroflexus aurantiacus (strain ATCC 29364 / DSM 637 / Y-400-fl).